A 488-amino-acid polypeptide reads, in one-letter code: Cytochrome P450 monooxygenase orf2 (488 aa).

The helical transmembrane segment at 7 to 27 threads the bilayer; the sequence is LPGIFLPLAGCVLALSLTTIV. Cysteine 432 contributes to the heme binding site.

It belongs to the cytochrome P450 family. Requires heme as cofactor.

It localises to the membrane. The protein operates within secondary metabolite biosynthesis. Functionally, cytochrome P450 monooxygenase; part of the gene cluster that mediates the biosynthesis of nigerpyrone and its derivatives carbonarone A and pestalamide A. The biosynthesis pathway begins with the polyketide assembly by epaA to form phenylacetyl triketide precursor from successive condensation of two malonyl-CoA, presumably with one phenylacetyl-CoA starter unit produced by the phenylacetyl-CoA ligase epaB. For the nigerpyrone biosynthesis, the reactive polyketide chain is released as an aldehyde through the R-domain. A nonenzymatic cyclization and dehydration may create nigerpyrone. For the biosynthesis of carbonarone A and pestalamide A, an extra methyl group is added through the C-methyltransferase domain. Several further steps involving the dehydrogenase orf1, the cytochrome P450 monooxygenase orf2 and the FAD-dependent monooxygenase orf3 are required to form a carbonarone A precursor which is converted to carbonarone A via cyclization. The O-acetyltransferase epaC could catalyze the transfer of 2-methylsuccinyl-CoA, a common intermediate in the ethylmalonyl-CoA pathway, to generate the final product pestalamide A. The chain is Cytochrome P450 monooxygenase orf2 from Aspergillus niger (strain ATCC MYA-4892 / CBS 513.88 / FGSC A1513).